Consider the following 111-residue polypeptide: UPF0060 membrane protein XAC3064 (111 aa).

A run of 4 helical transmembrane segments spans residues Leu8–Trp28, Gly32–Leu52, Ala64–Val84, and Leu91–Ala111.

The protein belongs to the UPF0060 family.

It is found in the cell inner membrane. In Xanthomonas axonopodis pv. citri (strain 306), this protein is UPF0060 membrane protein XAC3064.